The primary structure comprises 320 residues: o-succinylbenzoate synthase (320 aa).

Lys-133 (proton donor) is an active-site residue. Mg(2+) contacts are provided by Asp-161, Glu-190, and Asp-213. Catalysis depends on Lys-235, which acts as the Proton acceptor.

The protein belongs to the mandelate racemase/muconate lactonizing enzyme family. MenC type 1 subfamily. A divalent metal cation is required as a cofactor.

The enzyme catalyses (1R,6R)-6-hydroxy-2-succinyl-cyclohexa-2,4-diene-1-carboxylate = 2-succinylbenzoate + H2O. It participates in quinol/quinone metabolism; 1,4-dihydroxy-2-naphthoate biosynthesis; 1,4-dihydroxy-2-naphthoate from chorismate: step 4/7. The protein operates within quinol/quinone metabolism; menaquinone biosynthesis. In terms of biological role, converts 2-succinyl-6-hydroxy-2,4-cyclohexadiene-1-carboxylate (SHCHC) to 2-succinylbenzoate (OSB). The chain is o-succinylbenzoate synthase from Salmonella arizonae (strain ATCC BAA-731 / CDC346-86 / RSK2980).